We begin with the raw amino-acid sequence, 505 residues long: Probable malate:quinone oxidoreductase (505 aa).

Belongs to the MQO family. FAD serves as cofactor.

The catalysed reaction is (S)-malate + a quinone = a quinol + oxaloacetate. It participates in carbohydrate metabolism; tricarboxylic acid cycle; oxaloacetate from (S)-malate (quinone route): step 1/1. The polypeptide is Probable malate:quinone oxidoreductase (Pseudomonas fluorescens).